Here is a 474-residue protein sequence, read N- to C-terminus: Aspartyl/glutamyl-tRNA(Asn/Gln) amidotransferase subunit B (474 aa).

It belongs to the GatB/GatE family. GatB subfamily. As to quaternary structure, heterotrimer of A, B and C subunits.

The enzyme catalyses L-glutamyl-tRNA(Gln) + L-glutamine + ATP + H2O = L-glutaminyl-tRNA(Gln) + L-glutamate + ADP + phosphate + H(+). It catalyses the reaction L-aspartyl-tRNA(Asn) + L-glutamine + ATP + H2O = L-asparaginyl-tRNA(Asn) + L-glutamate + ADP + phosphate + 2 H(+). Allows the formation of correctly charged Asn-tRNA(Asn) or Gln-tRNA(Gln) through the transamidation of misacylated Asp-tRNA(Asn) or Glu-tRNA(Gln) in organisms which lack either or both of asparaginyl-tRNA or glutaminyl-tRNA synthetases. The reaction takes place in the presence of glutamine and ATP through an activated phospho-Asp-tRNA(Asn) or phospho-Glu-tRNA(Gln). The protein is Aspartyl/glutamyl-tRNA(Asn/Gln) amidotransferase subunit B of Persephonella marina (strain DSM 14350 / EX-H1).